The sequence spans 62 residues: Large ribosomal subunit protein bL32 (62 aa).

The disordered stretch occupies residues 28-62 (SIEPTTGEVHRRHHISPDGFYRGRQVIKAKEQDEE).

The protein belongs to the bacterial ribosomal protein bL32 family.

In Thioalkalivibrio sulfidiphilus (strain HL-EbGR7), this protein is Large ribosomal subunit protein bL32.